The sequence spans 500 residues: Probable cytosol aminopeptidase (500 aa).

Positions 262 and 267 each coordinate Mn(2+). Residue Lys-274 is part of the active site. Residues Asp-285, Asp-344, and Glu-346 each contribute to the Mn(2+) site. Residue Arg-348 is part of the active site.

It belongs to the peptidase M17 family. Mn(2+) is required as a cofactor.

It localises to the cytoplasm. It carries out the reaction Release of an N-terminal amino acid, Xaa-|-Yaa-, in which Xaa is preferably Leu, but may be other amino acids including Pro although not Arg or Lys, and Yaa may be Pro. Amino acid amides and methyl esters are also readily hydrolyzed, but rates on arylamides are exceedingly low.. The catalysed reaction is Release of an N-terminal amino acid, preferentially leucine, but not glutamic or aspartic acids.. In terms of biological role, presumably involved in the processing and regular turnover of intracellular proteins. Catalyzes the removal of unsubstituted N-terminal amino acids from various peptides. The sequence is that of Probable cytosol aminopeptidase from Ehrlichia ruminantium (strain Gardel).